The primary structure comprises 309 residues: Homoserine O-succinyltransferase (309 aa).

Cys142 serves as the catalytic Acyl-thioester intermediate. Lys163 and Ser192 together coordinate substrate. The active-site Proton acceptor is the His235. Residue Glu237 is part of the active site. Arg249 contributes to the substrate binding site.

It belongs to the MetA family. As to quaternary structure, homodimer.

The protein resides in the cytoplasm. It catalyses the reaction L-homoserine + succinyl-CoA = O-succinyl-L-homoserine + CoA. The protein operates within amino-acid biosynthesis; L-methionine biosynthesis via de novo pathway; O-succinyl-L-homoserine from L-homoserine: step 1/1. Transfers a succinyl group from succinyl-CoA to L-homoserine, forming succinyl-L-homoserine. The protein is Homoserine O-succinyltransferase of Escherichia fergusonii (strain ATCC 35469 / DSM 13698 / CCUG 18766 / IAM 14443 / JCM 21226 / LMG 7866 / NBRC 102419 / NCTC 12128 / CDC 0568-73).